A 240-amino-acid chain; its full sequence is MLTRKQHELLLFIHERLKETGIPPSFDEMKEALDLASKSGIHRLITALEERGFIRRLPNRARALEVLRLPDSIAPGLSPQKKFAPSVIEGSLGKVASVQPVRPAPAPQNSEAPATVSVPVMGRIAAGVPISAIQNQTHMLSLPPEMIGAGEHYALEVKGDSMIDAGIFDGDTVIIKRGDTANPGEIVVALVDEEEATLKRFRREGASIALEAANPAYETRIFGPDRVHVQGKLVGLIRRY.

Positions 26-46 form a DNA-binding region, H-T-H motif; the sequence is FDEMKEALDLASKSGIHRLIT. Active-site for autocatalytic cleavage activity residues include serine 161 and lysine 199.

This sequence belongs to the peptidase S24 family. As to quaternary structure, homodimer.

The catalysed reaction is Hydrolysis of Ala-|-Gly bond in repressor LexA.. Functionally, represses a number of genes involved in the response to DNA damage (SOS response), including recA and lexA. In the presence of single-stranded DNA, RecA interacts with LexA causing an autocatalytic cleavage which disrupts the DNA-binding part of LexA, leading to derepression of the SOS regulon and eventually DNA repair. This is LexA repressor from Brucella ovis (strain ATCC 25840 / 63/290 / NCTC 10512).